We begin with the raw amino-acid sequence, 429 residues long: Enolase (429 aa).

Q166 lines the (2R)-2-phosphoglycerate pocket. The active-site Proton donor is the E208. Mg(2+)-binding residues include D245, E289, and D316. Residues K341, R370, S371, and K392 each coordinate (2R)-2-phosphoglycerate. K341 serves as the catalytic Proton acceptor.

This sequence belongs to the enolase family. In terms of assembly, component of the RNA degradosome, a multiprotein complex involved in RNA processing and mRNA degradation. It depends on Mg(2+) as a cofactor.

Its subcellular location is the cytoplasm. It is found in the secreted. It localises to the cell surface. It catalyses the reaction (2R)-2-phosphoglycerate = phosphoenolpyruvate + H2O. It participates in carbohydrate degradation; glycolysis; pyruvate from D-glyceraldehyde 3-phosphate: step 4/5. Functionally, catalyzes the reversible conversion of 2-phosphoglycerate (2-PG) into phosphoenolpyruvate (PEP). It is essential for the degradation of carbohydrates via glycolysis. The sequence is that of Enolase from Acinetobacter baumannii (strain AB307-0294).